Here is a 22-residue protein sequence, read N- to C-terminus: Sex pheromone inhibitor determinant (22 aa).

Residues 1–14 (MSKRAMKKIIPLIT) constitute a propeptide that is removed on maturation.

The protein resides in the secreted. Its function is as follows. Acts as a competitive inhibitor of the CAD1 pheromone. This chain is Sex pheromone inhibitor determinant (iad), found in Enterococcus faecalis (strain ATCC 700802 / V583).